A 669-amino-acid chain; its full sequence is tRNA 5-methylaminomethyl-2-thiouridine biosynthesis bifunctional protein MnmC (669 aa).

Residues 1-246 (MIKNANIHFN…KRSMLIGTLK (246 aa)) are tRNA (mnm(5)s(2)U34)-methyltransferase. Residues 271-669 (IGGGIASSCI…IVRDLIRNKI (399 aa)) form an FAD-dependent cmnm(5)s(2)U34 oxidoreductase region.

It in the N-terminal section; belongs to the methyltransferase superfamily. tRNA (mnm(5)s(2)U34)-methyltransferase family. This sequence in the C-terminal section; belongs to the DAO family. FAD serves as cofactor.

The protein resides in the cytoplasm. The catalysed reaction is 5-aminomethyl-2-thiouridine(34) in tRNA + S-adenosyl-L-methionine = 5-methylaminomethyl-2-thiouridine(34) in tRNA + S-adenosyl-L-homocysteine + H(+). In terms of biological role, catalyzes the last two steps in the biosynthesis of 5-methylaminomethyl-2-thiouridine (mnm(5)s(2)U) at the wobble position (U34) in tRNA. Catalyzes the FAD-dependent demodification of cmnm(5)s(2)U34 to nm(5)s(2)U34, followed by the transfer of a methyl group from S-adenosyl-L-methionine to nm(5)s(2)U34, to form mnm(5)s(2)U34. The polypeptide is tRNA 5-methylaminomethyl-2-thiouridine biosynthesis bifunctional protein MnmC (Pseudoalteromonas translucida (strain TAC 125)).